A 330-amino-acid chain; its full sequence is DNA-directed RNA polymerase subunit alpha (330 aa).

The alpha N-terminal domain (alpha-NTD) stretch occupies residues 1 to 236 (MQGSVTEFLK…EQLDAFVDLR (236 aa)). The alpha C-terminal domain (alpha-CTD) stretch occupies residues 250 to 330 (FDPILLRPVD…NWPPASIAED (81 aa)).

Belongs to the RNA polymerase alpha chain family. Homodimer. The RNAP catalytic core consists of 2 alpha, 1 beta, 1 beta' and 1 omega subunit. When a sigma factor is associated with the core the holoenzyme is formed, which can initiate transcription.

The catalysed reaction is RNA(n) + a ribonucleoside 5'-triphosphate = RNA(n+1) + diphosphate. In terms of biological role, DNA-dependent RNA polymerase catalyzes the transcription of DNA into RNA using the four ribonucleoside triphosphates as substrates. This Vibrio atlanticus (strain LGP32) (Vibrio splendidus (strain Mel32)) protein is DNA-directed RNA polymerase subunit alpha.